Reading from the N-terminus, the 447-residue chain is Probable glycine dehydrogenase (decarboxylating) subunit 1 (447 aa).

It belongs to the GcvP family. N-terminal subunit subfamily. The glycine cleavage system is composed of four proteins: P, T, L and H. In this organism, the P 'protein' is a heterodimer of two subunits.

The enzyme catalyses N(6)-[(R)-lipoyl]-L-lysyl-[glycine-cleavage complex H protein] + glycine + H(+) = N(6)-[(R)-S(8)-aminomethyldihydrolipoyl]-L-lysyl-[glycine-cleavage complex H protein] + CO2. The glycine cleavage system catalyzes the degradation of glycine. The P protein binds the alpha-amino group of glycine through its pyridoxal phosphate cofactor; CO(2) is released and the remaining methylamine moiety is then transferred to the lipoamide cofactor of the H protein. The protein is Probable glycine dehydrogenase (decarboxylating) subunit 1 of Azorhizobium caulinodans (strain ATCC 43989 / DSM 5975 / JCM 20966 / LMG 6465 / NBRC 14845 / NCIMB 13405 / ORS 571).